Reading from the N-terminus, the 150-residue chain is UPF0756 membrane protein plu2726 (150 aa).

A run of 4 helical transmembrane segments spans residues 8-28, 51-71, 88-108, and 123-143; these read LLVLLVLAALGIISHNMTVTL, YGLTIGVLILTVGVMAPIASG, LLAIVIGVLVSWLGSRGVSLM, and VLGVALFKGVPVGPLIAAGIL.

The protein belongs to the UPF0756 family.

The protein localises to the cell membrane. The polypeptide is UPF0756 membrane protein plu2726 (Photorhabdus laumondii subsp. laumondii (strain DSM 15139 / CIP 105565 / TT01) (Photorhabdus luminescens subsp. laumondii)).